A 203-amino-acid polypeptide reads, in one-letter code: Protein GrpE (203 aa).

A compositionally biased stretch (basic and acidic residues) spans 1-20 (MSSKEQNVHEEQVSKEKEGM). The tract at residues 1 to 38 (MSSKEQNVHEEQVSKEKEGMESVMNESQEQVKSEDAQA) is disordered.

The protein belongs to the GrpE family. Homodimer.

It is found in the cytoplasm. Its function is as follows. Participates actively in the response to hyperosmotic and heat shock by preventing the aggregation of stress-denatured proteins, in association with DnaK and GrpE. It is the nucleotide exchange factor for DnaK and may function as a thermosensor. Unfolded proteins bind initially to DnaJ; upon interaction with the DnaJ-bound protein, DnaK hydrolyzes its bound ATP, resulting in the formation of a stable complex. GrpE releases ADP from DnaK; ATP binding to DnaK triggers the release of the substrate protein, thus completing the reaction cycle. Several rounds of ATP-dependent interactions between DnaJ, DnaK and GrpE are required for fully efficient folding. This Proteus mirabilis (strain HI4320) protein is Protein GrpE.